The following is a 72-amino-acid chain: Disintegrin basilicin (72 aa).

One can recognise a Disintegrin domain in the interval 1–72 (AGEECDCGSP…ADCPRNHFHA (72 aa)). 6 disulfide bridges follow: Cys-5–Cys-20, Cys-7–Cys-15, Cys-14–Cys-37, Cys-28–Cys-34, Cys-33–Cys-58, and Cys-46–Cys-65. The Cell attachment site motif lies at 50 to 52 (RGD).

It belongs to the venom metalloproteinase (M12B) family. P-II subfamily. P-IIa sub-subfamily. Monomer (disintegrin). Expressed by the venom gland.

The protein resides in the secreted. Inhibits fibrinogen interaction with platelets. Acts by binding to alpha-IIb/beta-3 (ITGA2B/ITGB3) on the platelet surface and inhibits aggregation induced by ADP, thrombin, platelet-activating factor and collagen. In Crotalus basiliscus (Mexican west-coast rattlesnake), this protein is Disintegrin basilicin.